The chain runs to 534 residues: Peptide chain release factor 3 (534 aa).

The tr-type G domain occupies 9 to 278 (ARRRTFAIIS…FFVEHAPPPQ (270 aa)). Residues 18–25 (SHPDAGKT), 86–90 (DTPGH), and 140–143 (NKLD) each bind GTP.

It belongs to the TRAFAC class translation factor GTPase superfamily. Classic translation factor GTPase family. PrfC subfamily.

The protein resides in the cytoplasm. Functionally, increases the formation of ribosomal termination complexes and stimulates activities of RF-1 and RF-2. It binds guanine nucleotides and has strong preference for UGA stop codons. It may interact directly with the ribosome. The stimulation of RF-1 and RF-2 is significantly reduced by GTP and GDP, but not by GMP. In Xanthomonas euvesicatoria pv. vesicatoria (strain 85-10) (Xanthomonas campestris pv. vesicatoria), this protein is Peptide chain release factor 3.